Reading from the N-terminus, the 822-residue chain is Fibroblast growth factor receptor 1 (822 aa).

An N-terminal signal peptide occupies residues 1–21; it reads MWSWKCLLFWAVLVTATLCTA. Residues 22–376 are Extracellular-facing; it reads RPSPTLPEQA…AVMTSPLYLE (355 aa). In terms of domain architecture, Ig-like C2-type 1 spans 25–119; it reads PTLPEQAQPW…DTTYFSVNVS (95 aa). Cysteines 55 and 101 form a disulfide. Residues Asn77 and Asn117 are each glycosylated (N-linked (GlcNAc...) asparagine). Positions 120-154 are disordered; that stretch reads DALPSSEDDDDDDDSSSEEKETDNTKPNRMPVAPY. Acidic residues predominate over residues 125 to 135; the sequence is SEDDDDDDDSS. Positions 136–145 are enriched in basic and acidic residues; it reads SEEKETDNTK. Ig-like C2-type domains lie at 158-246 and 255-357; these read PEKM…YQLD and PILQ…AWLT. Residues 160–177 are heparin-binding; it reads KMEKKLHAVPAAKTVKFK. Cys178 and Cys230 are disulfide-bonded. N-linked (GlcNAc...) asparagine glycans are attached at residues Asn227, Asn240, Asn264, Asn296, Asn317, and Asn330. Residues Cys277 and Cys341 are joined by a disulfide bond. The chain crosses the membrane as a helical span at residues 377-397; it reads IIIYCTGAFLISCMVGSVIVY. Residues 398–822 lie on the Cytoplasmic side of the membrane; that stretch reads KMKSGTKKSD…QLANGGLKRR (425 aa). Tyr463 is modified (phosphotyrosine; by autocatalysis). Residues 478-767 form the Protein kinase domain; the sequence is LVLGKPLGEG…VALTSNQEYL (290 aa). ATP-binding positions include 484-490, Lys514, 562-564, and Asn568; these read LGEGCFG and EYA. Residues Tyr583 and Tyr585 each carry the phosphotyrosine; by autocatalysis modification. The active-site Proton acceptor is the Asp623. The ATP site is built by Arg627 and Asp641. Residues Tyr653, Tyr654, Tyr730, and Tyr766 each carry the phosphotyrosine; by autocatalysis modification. Residues 778-792 are compositionally biased toward polar residues; that stretch reads PSFPDTRSSTCSSGE. The interval 778–822 is disordered; the sequence is PSFPDTRSSTCSSGEDSVFSHEPLPEEPCLPRHPAQLANGGLKRR.

This sequence belongs to the protein kinase superfamily. Tyr protein kinase family. Fibroblast growth factor receptor subfamily. As to quaternary structure, monomer. Homodimer after ligand binding. Interacts predominantly with FGF1 and FGF2, but can also interact with FGF3, FGF4, FGF5, FGF6, FGF8, FGF10, FGF19, FGF21, FGF22 and FGF23 (in vitro). Ligand specificity is determined by tissue-specific expression of isoforms, and differences in the third Ig-like domain are crucial for ligand specificity. Affinity for fibroblast growth factors (FGFs) is increased by heparan sulfate glycosaminoglycans that function as coreceptors. Likewise, KLB increases the affinity for FGF19, FGF21 and FGF23. Interacts (phosphorylated on Tyr-766) with PLCG1 (via SH2 domains). Interacts with FRS2. Interacts with RPS6KA1. Interacts (via C-terminus) with NEDD4 (via WW3 domain). Interacts with KL. Interacts with SHB (via SH2 domain). Interacts with GRB10. Interacts with ANOS1; this interaction does not interfere with FGF2-binding to FGFR1, but prevents binding of heparin-bound FGF2. Interacts with SOX2 and SOX3. Interacts with FLRT1, FLRT2 and FLRT3. Found in a ternary complex with FGF1 and ITGAV:ITGB3. Autophosphorylated. Binding of FGF family members together with heparan sulfate proteoglycan or heparin promotes receptor dimerization and autophosphorylation on tyrosine residues. Autophosphorylation occurs in trans between the two FGFR molecules present in the dimer and proceeds in a highly ordered manner. Initial autophosphorylation at Tyr-653 increases the kinase activity by a factor of 50 to 100. After this, Tyr-583 becomes phosphorylated, followed by phosphorylation of Tyr-463, Tyr-766, Tyr-583 and Tyr-585. In a third stage, Tyr-654 is autophosphorylated, resulting in a further tenfold increase of kinase activity. Phosphotyrosine residues provide docking sites for interacting proteins and so are crucial for FGFR1 function and its regulation. Post-translationally, ubiquitinated. FGFR1 is rapidly ubiquitinated by NEDD4 after autophosphorylation, leading to internalization and lysosomal degradation. CBL is recruited to activated FGFR1 via FRS2 and GRB2, and mediates ubiquitination and subsequent degradation of FGFR1. In terms of processing, N-glycosylated in the endoplasmic reticulum. The N-glycan chains undergo further maturation to an Endo H-resistant form in the Golgi apparatus. In terms of tissue distribution, detected in astrocytoma, neuroblastoma and adrenal cortex cell lines. Some isoforms are detected in foreskin fibroblast cell lines, however isoform 17, isoform 18 and isoform 19 are not detected in these cells.

The protein localises to the cell membrane. It localises to the nucleus. Its subcellular location is the cytoplasm. It is found in the cytosol. The protein resides in the cytoplasmic vesicle. The enzyme catalyses L-tyrosyl-[protein] + ATP = O-phospho-L-tyrosyl-[protein] + ADP + H(+). With respect to regulation, present in an inactive conformation in the absence of bound ligand. Ligand binding leads to dimerization and activation by sequential autophosphorylation on tyrosine residues. Inhibited by ARQ 069; this compound maintains the kinase in an inactive conformation and inhibits autophosphorylation. Inhibited by PD173074. Functionally, tyrosine-protein kinase that acts as a cell-surface receptor for fibroblast growth factors and plays an essential role in the regulation of embryonic development, cell proliferation, differentiation and migration. Required for normal mesoderm patterning and correct axial organization during embryonic development, normal skeletogenesis and normal development of the gonadotropin-releasing hormone (GnRH) neuronal system. Phosphorylates PLCG1, FRS2, GAB1 and SHB. Ligand binding leads to the activation of several signaling cascades. Activation of PLCG1 leads to the production of the cellular signaling molecules diacylglycerol and inositol 1,4,5-trisphosphate. Phosphorylation of FRS2 triggers recruitment of GRB2, GAB1, PIK3R1 and SOS1, and mediates activation of RAS, MAPK1/ERK2, MAPK3/ERK1 and the MAP kinase signaling pathway, as well as of the AKT1 signaling pathway. Promotes phosphorylation of SHC1, STAT1 and PTPN11/SHP2. In the nucleus, enhances RPS6KA1 and CREB1 activity and contributes to the regulation of transcription. FGFR1 signaling is down-regulated by IL17RD/SEF, and by FGFR1 ubiquitination, internalization and degradation. In Homo sapiens (Human), this protein is Fibroblast growth factor receptor 1 (FGFR1).